Reading from the N-terminus, the 341-residue chain is Inositol 2-dehydrogenase (341 aa).

It belongs to the Gfo/Idh/MocA family. As to quaternary structure, homotetramer.

The enzyme catalyses myo-inositol + NAD(+) = scyllo-inosose + NADH + H(+). Involved in the oxidation of myo-inositol (MI) to 2-keto-myo-inositol (2KMI or 2-inosose). This is Inositol 2-dehydrogenase from Acidothermus cellulolyticus (strain ATCC 43068 / DSM 8971 / 11B).